A 229-amino-acid polypeptide reads, in one-letter code: NAD(P)H-hydrate epimerase (229 aa).

Positions 9 to 216 (AISVDEELFN…KLEEKYAMNL (208 aa)) constitute a YjeF N-terminal domain. Residue 59–63 (NNGGD) participates in (6S)-NADPHX binding. 2 residues coordinate K(+): Asn60 and Asp124. (6S)-NADPHX contacts are provided by residues 128–134 (GFSFKPP) and Asp157. Residue Ser160 coordinates K(+).

Belongs to the NnrE/AIBP family. K(+) serves as cofactor.

It catalyses the reaction (6R)-NADHX = (6S)-NADHX. The enzyme catalyses (6R)-NADPHX = (6S)-NADPHX. Its function is as follows. Catalyzes the epimerization of the S- and R-forms of NAD(P)HX, a damaged form of NAD(P)H that is a result of enzymatic or heat-dependent hydration. This is a prerequisite for the S-specific NAD(P)H-hydrate dehydratase to allow the repair of both epimers of NAD(P)HX. The protein is NAD(P)H-hydrate epimerase of Anopheles gambiae (African malaria mosquito).